A 104-amino-acid polypeptide reads, in one-letter code: L-rhamnose mutarotase (104 aa).

Residue Tyr-18 participates in substrate binding. Catalysis depends on His-22, which acts as the Proton donor. Substrate-binding positions include Tyr-41 and 76–77; that span reads WW.

This sequence belongs to the rhamnose mutarotase family. As to quaternary structure, homodimer.

Its subcellular location is the cytoplasm. The enzyme catalyses alpha-L-rhamnose = beta-L-rhamnose. The protein operates within carbohydrate metabolism; L-rhamnose metabolism. Involved in the anomeric conversion of L-rhamnose. The polypeptide is L-rhamnose mutarotase (Escherichia coli O1:K1 / APEC).